The primary structure comprises 562 residues: NAD-dependent malic enzyme (562 aa).

The Proton donor role is filled by tyrosine 101. An NAD(+)-binding site is contributed by arginine 154. The active-site Proton acceptor is the lysine 172. Glutamate 243, aspartate 244, and aspartate 267 together coordinate a divalent metal cation. NAD(+)-binding residues include aspartate 267 and asparagine 415.

This sequence belongs to the malic enzymes family. As to quaternary structure, homotetramer. Requires Mg(2+) as cofactor. Mn(2+) is required as a cofactor.

It catalyses the reaction (S)-malate + NAD(+) = pyruvate + CO2 + NADH. It carries out the reaction oxaloacetate + H(+) = pyruvate + CO2. This Shewanella frigidimarina (strain NCIMB 400) protein is NAD-dependent malic enzyme.